Here is a 163-residue protein sequence, read N- to C-terminus: 3-hydroxyacyl-[acyl-carrier-protein] dehydratase FabZ (163 aa).

The active site involves His58.

This sequence belongs to the thioester dehydratase family. FabZ subfamily.

It is found in the cytoplasm. The catalysed reaction is a (3R)-hydroxyacyl-[ACP] = a (2E)-enoyl-[ACP] + H2O. Functionally, involved in unsaturated fatty acids biosynthesis. Catalyzes the dehydration of short chain beta-hydroxyacyl-ACPs and long chain saturated and unsaturated beta-hydroxyacyl-ACPs. The polypeptide is 3-hydroxyacyl-[acyl-carrier-protein] dehydratase FabZ (Francisella tularensis subsp. tularensis (strain FSC 198)).